Reading from the N-terminus, the 309-residue chain is ADP-L-glycero-D-manno-heptose-6-epimerase (309 aa).

Residues 10–11 (FI), 31–32 (DN), lysine 38, lysine 53, 75–79 (EGACS), and asparagine 92 contribute to the NADP(+) site. Tyrosine 140 serves as the catalytic Proton acceptor. Lysine 144 contributes to the NADP(+) binding site. Asparagine 169 is a substrate binding site. Residues valine 170 and lysine 178 each coordinate NADP(+). Lysine 178 (proton acceptor) is an active-site residue. Substrate contacts are provided by residues serine 180, histidine 187, 201-204 (FEGS), arginine 209, and tyrosine 272.

Belongs to the NAD(P)-dependent epimerase/dehydratase family. HldD subfamily. Homopentamer. NADP(+) serves as cofactor.

The enzyme catalyses ADP-D-glycero-beta-D-manno-heptose = ADP-L-glycero-beta-D-manno-heptose. Its pathway is nucleotide-sugar biosynthesis; ADP-L-glycero-beta-D-manno-heptose biosynthesis; ADP-L-glycero-beta-D-manno-heptose from D-glycero-beta-D-manno-heptose 7-phosphate: step 4/4. Its function is as follows. Catalyzes the interconversion between ADP-D-glycero-beta-D-manno-heptose and ADP-L-glycero-beta-D-manno-heptose via an epimerization at carbon 6 of the heptose. The sequence is that of ADP-L-glycero-D-manno-heptose-6-epimerase from Enterobacter sp. (strain 638).